The primary structure comprises 1092 residues: Electroneutral sodium bicarbonate exchanger 1 (1092 aa).

Disordered stretches follow at residues 1-26 (MPAG…VDQG), 55-95 (LGRQ…HDTP), and 243-263 (KKQS…PQSA). At 1-478 (MPAGSNEPDG…DYRDALSLQC (478 aa)) the chain is on the extracellular side. Over residues 58 to 76 (QSHRHHRTHGQKHRRRGGR) the composition is skewed to basic residues. Residues 243–255 (KKQSDPHSMDRDG) are compositionally biased toward basic and acidic residues. A helical membrane pass occupies residues 479–499 (LASFLFLYCACMSPVITFGGL). Residues 500–507 (LGEATEGR) lie on the Cytoplasmic side of the membrane. Residues 508 to 528 (ISAIESLFGASMTGIAYSLFA) traverse the membrane as a helical segment. The Extracellular segment spans residues 529 to 565 (GQPLTILGSTGPVLVFEKILFKFCKDYALSYLSLRAC). A helical membrane pass occupies residues 566-586 (IGLWTAFLCIVLVATDASSLV). Residues 587–595 (CYITRFTEE) lie on the Cytoplasmic side of the membrane. Residues 596-616 (AFASLICIIFIYEAIEKLIHL) form a helical membrane-spanning segment. Residues 617 to 687 (AETYPIHMHS…EFIGSACGHH (71 aa)) are Extracellular-facing. 2 cysteine pairs are disulfide-bonded: C636–C684 and C638–C672. N-linked (GlcNAc) asparagine glycans are attached at residues N646 and N666. Residues 688–708 (GPYTPDVLFWSCILFFATFIV) traverse the membrane as a helical segment. Residues 709-731 (SSTLKTFKTSRYFPTRVRSTVSD) are Cytoplasmic-facing. A helical membrane pass occupies residues 732-752 (FAVFLTIFTMVILDFLIGVPS). Residues 753-778 (PKLQVPSVFKPTRDDRGWFISPIGPN) lie on the Extracellular side of the membrane. A helical transmembrane segment spans residues 779–799 (PWWTVIAAIIPALLCTILIFM). At 800-824 (DQQITAVIINRKEHKLKKGCGYHLD) the chain is on the cytoplasmic side. The helical transmembrane segment at 825 to 845 (LLVVAIMLGVCSLMGLPWFVA) threads the bilayer. Residues 846–881 (ATVLSITHVNSLKLESECSAPGEQPKFLGIREQRVT) lie on the Extracellular side of the membrane. The chain crosses the membrane as a helical span at residues 882-902 (GLMIFVLMGCSVFMTAVLKFI). Residues 903 to 904 (PM) are Cytoplasmic-facing. The chain crosses the membrane as a helical span at residues 905–925 (PVLYGVFLYMGVSSLQGIQFF). Topologically, residues 926 to 962 (DRLKLFGMPAKHQPDFIYLRHVPLRKVHLFTLVQLTC) are extracellular. The helical transmembrane segment at 963–983 (LVLLWVIKASPAAIVFPMMVL) threads the bilayer. The Cytoplasmic segment spans residues 984 to 1092 (ALVFVRKVMD…GNTKEKSPFN (109 aa)).

Belongs to the anion exchanger (TC 2.A.31) family. Homodimer. In terms of tissue distribution, expressed in the Purkinje cells and dendrites in the molecular layer of the cerebellum (at protein level). Expressed in the hippocampal neurons (at protein level). Strong expression observed in testis and moderate expression in kidney inner medulla, the submandibular gland, eye, cerebrum and cerebellum.

The protein resides in the cell membrane. It localises to the apical cell membrane. Its subcellular location is the basolateral cell membrane. It is found in the cytoplasmic vesicle. The protein localises to the secretory vesicle. The protein resides in the synaptic vesicle membrane. The catalysed reaction is 2 hydrogencarbonate(out) + chloride(in) + Na(+)(out) = 2 hydrogencarbonate(in) + chloride(out) + Na(+)(in). Its function is as follows. Mediates electroneutral sodium- and carbonate-dependent chloride-HCO3(-) exchange with a Na(+):HCO3(-) stoichiometry of 2:1. Plays a major role in pH regulation in neurons. Mediates sodium reabsorption in the renal cortical collecting ducts. The sequence is that of Electroneutral sodium bicarbonate exchanger 1 from Rattus norvegicus (Rat).